The following is a 66-amino-acid chain: Protein translocase subunit SecE (66 aa).

A helical membrane pass occupies residues 29 to 49; it reads LVASTLVVVVAVFIFSPICLV.

The protein belongs to the SecE/SEC61-gamma family. As to quaternary structure, component of the Sec protein translocase complex. Heterotrimer consisting of SecY, SecE and SecG subunits. The heterotrimers can form oligomers, although 1 heterotrimer is thought to be able to translocate proteins. Interacts with the ribosome. Interacts with SecDF, and other proteins may be involved. Interacts with SecA.

The protein localises to the cell inner membrane. In terms of biological role, essential subunit of the Sec protein translocation channel SecYEG. Clamps together the 2 halves of SecY. May contact the channel plug during translocation. The protein is Protein translocase subunit SecE of Rickettsia montanensis.